The following is a 411-amino-acid chain: Glutamate dehydrogenase A (411 aa).

The active site involves Lys102.

It belongs to the Glu/Leu/Phe/Val dehydrogenases family.

The enzyme catalyses L-glutamate + NAD(+) + H2O = 2-oxoglutarate + NH4(+) + NADH + H(+). It carries out the reaction L-glutamate + NADP(+) + H2O = 2-oxoglutarate + NH4(+) + NADPH + H(+). The chain is Glutamate dehydrogenase A (GDHA) from Nicotiana plumbaginifolia (Leadwort-leaved tobacco).